The chain runs to 740 residues: Folic acid synthesis protein fol1 (740 aa).

DHNA stretches follow at residues Asp39 to Asp160 and Asp161 to Ser280. The tract at residues Ile291 to Pro449 is HPPK. In terms of domain architecture, Pterin-binding spans Thr471–Lys730. A DHPS region spans residues Ile473 to Tyr740. Asn478 contributes to the Mg(2+) binding site. (7,8-dihydropterin-6-yl)methyl diphosphate contacts are provided by residues Thr517, Asp552, Asn571, Asp643, Lys683, and Arg718–His720.

It in the N-terminal section; belongs to the DHNA family. This sequence in the central section; belongs to the HPPK family. The protein in the C-terminal section; belongs to the DHPS family. Mg(2+) is required as a cofactor.

The catalysed reaction is 7,8-dihydroneopterin = 6-hydroxymethyl-7,8-dihydropterin + glycolaldehyde. It catalyses the reaction 6-hydroxymethyl-7,8-dihydropterin + ATP = (7,8-dihydropterin-6-yl)methyl diphosphate + AMP + H(+). The enzyme catalyses (7,8-dihydropterin-6-yl)methyl diphosphate + 4-aminobenzoate = 7,8-dihydropteroate + diphosphate. It functions in the pathway cofactor biosynthesis; tetrahydrofolate biosynthesis; 2-amino-4-hydroxy-6-hydroxymethyl-7,8-dihydropteridine diphosphate from 7,8-dihydroneopterin triphosphate: step 3/4. It participates in cofactor biosynthesis; tetrahydrofolate biosynthesis; 2-amino-4-hydroxy-6-hydroxymethyl-7,8-dihydropteridine diphosphate from 7,8-dihydroneopterin triphosphate: step 4/4. The protein operates within cofactor biosynthesis; tetrahydrofolate biosynthesis; 7,8-dihydrofolate from 2-amino-4-hydroxy-6-hydroxymethyl-7,8-dihydropteridine diphosphate and 4-aminobenzoate: step 1/2. Its function is as follows. Catalyzes three sequential steps of tetrahydrofolate biosynthesis. This Pneumocystis carinii protein is Folic acid synthesis protein fol1 (fol1).